Consider the following 377-residue polypeptide: uncharacterized protein (377 aa).

The next 2 helical transmembrane spans lie at leucine 23–tyrosine 43 and glycine 251–tyrosine 271.

The protein resides in the cell membrane. This is an uncharacterized protein from Methanocaldococcus jannaschii (strain ATCC 43067 / DSM 2661 / JAL-1 / JCM 10045 / NBRC 100440) (Methanococcus jannaschii).